A 113-amino-acid polypeptide reads, in one-letter code: U11-theraphotoxin-Hhn1a (113 aa).

A signal peptide spans 1 to 21 (MNTVRVTFLLVFVLAVSLGRA). Residues 22 to 74 (DKDENRMEMQEKTEQGKSYLDFAENLLLQKLEELEAKLLEEDSEESRNSRQKR) constitute a propeptide that is removed on maturation. 3 cysteine pairs are disulfide-bonded: Cys-75–Cys-90, Cys-82–Cys-95, and Cys-89–Cys-110.

It belongs to the neurotoxin 14 (magi-1) family. 01 (HNTX-16) subfamily. In terms of tissue distribution, expressed by the venom gland.

It is found in the secreted. Its function is as follows. Probable ion channel inhibitor. This Cyriopagopus hainanus (Chinese bird spider) protein is U11-theraphotoxin-Hhn1a.